A 414-amino-acid chain; its full sequence is Gamma-glutamyl phosphate reductase (414 aa).

This sequence belongs to the gamma-glutamyl phosphate reductase family.

It localises to the cytoplasm. It catalyses the reaction L-glutamate 5-semialdehyde + phosphate + NADP(+) = L-glutamyl 5-phosphate + NADPH + H(+). It functions in the pathway amino-acid biosynthesis; L-proline biosynthesis; L-glutamate 5-semialdehyde from L-glutamate: step 2/2. Functionally, catalyzes the NADPH-dependent reduction of L-glutamate 5-phosphate into L-glutamate 5-semialdehyde and phosphate. The product spontaneously undergoes cyclization to form 1-pyrroline-5-carboxylate. This Geobacillus thermodenitrificans (strain NG80-2) protein is Gamma-glutamyl phosphate reductase.